Reading from the N-terminus, the 140-residue chain is uncharacterized protein (140 aa).

Residues 26–80 (IRSQRETAHVSMRQLAERSGVSNPYLSQVERGLRKPSADVLSQIAKALRVSAEVL) enclose the HTH cro/C1-type domain. The H-T-H motif DNA-binding region spans 37–56 (MRQLAERSGVSNPYLSQVER).

This is an uncharacterized protein from Mycobacterium tuberculosis (strain ATCC 25618 / H37Rv).